The chain runs to 403 residues: Phosphoglycerate kinase (403 aa).

Substrate contacts are provided by residues 21-23, arginine 36, 59-62, arginine 119, and arginine 154; these read DFN and HLGR. ATP is bound by residues lysine 207, glycine 299, glutamate 330, and 357–360; that span reads GGDA.

Belongs to the phosphoglycerate kinase family. As to quaternary structure, monomer.

The protein localises to the cytoplasm. The enzyme catalyses (2R)-3-phosphoglycerate + ATP = (2R)-3-phospho-glyceroyl phosphate + ADP. The protein operates within carbohydrate degradation; glycolysis; pyruvate from D-glyceraldehyde 3-phosphate: step 2/5. The sequence is that of Phosphoglycerate kinase from Chlamydia trachomatis serovar A (strain ATCC VR-571B / DSM 19440 / HAR-13).